The primary structure comprises 442 residues: Limonoid 1-O-acetyltransferse (442 aa).

Catalysis depends on proton acceptor residues His155 and Asp381.

Belongs to the plant acyltransferase family. Monomer.

It catalyses the reaction (1S)-1-hydroxy-luvungin A + acetyl-CoA = (1S)-1-acetoxy-luvungin A + CoA. Its pathway is secondary metabolite biosynthesis; terpenoid biosynthesis. Functionally, acetyltransferase involved in the biosynthesis of limonoids triterpene natural products such as limonin, a compound with insecticidal activity responsible for the bitter taste in citrus. Catalyzes the formation of (1S)-1-acetoxy-luvungin A from (1S)-1-hydroxy-luvungin A. The chain is Limonoid 1-O-acetyltransferse from Citrus sinensis (Sweet orange).